A 125-amino-acid polypeptide reads, in one-letter code: uncharacterized protein (125 aa).

The tract at residues 36 to 57 is disordered; that stretch reads EAKKAKEKQDSKTKDTDKKVDQ. A helical membrane pass occupies residues 92 to 112; sequence ITIFLLIVLVSAIMIGIYFGI.

It is found in the membrane. This is an uncharacterized protein from Mycoplasma pneumoniae (strain ATCC 29342 / M129 / Subtype 1) (Mycoplasmoides pneumoniae).